The chain runs to 224 residues: UPF0111 protein CPn_0681/CP_0066/CPj0681/CpB0708 (224 aa).

It belongs to the UPF0111 family.

This is UPF0111 protein CPn_0681/CP_0066/CPj0681/CpB0708 from Chlamydia pneumoniae (Chlamydophila pneumoniae).